A 239-amino-acid polypeptide reads, in one-letter code: Diablo IAP-binding mitochondrial protein (239 aa).

Residues 1–22 (MAVLKSWLSRSVTLLFRYRQCL) constitute a mitochondrion transit peptide. The short motif at 56–60 (AVPIA) is the IAP-binding element. Residues 217–239 (RQKTQEEGEERAESEQEAYLRED) are disordered.

It belongs to the Smac/DIABLO protein family. Homodimer. Interacts with BEX3. Interacts with BIRC2/c-IAP1 (via BIR3 domain). Interacts with BIRC6/BRUCE. Interacts with BIRC7/livin. Interacts with XIAP/BIRC4 (via BIR3 domain). Interacts with the monomeric and dimeric form of BIRC5/survivin. Interacts with AREL1 (via HECT domain); in the cytoplasm following induction of apoptosis. In terms of processing, ubiquitinated by BIRC7/livin. Ubiquitinated by BIRC6. Post-translationally, the precursor form is proteolytically cleaved by mitochondrial processing peptidase MPP to remove the transit peptide and produce an intermediate form. This is then processed by PARL to produce the mature cleaved form which is released from mitochondria into the cytosol in apoptotic cells.

It is found in the mitochondrion. It localises to the cytoplasm. The protein resides in the cytosol. Functionally, promotes apoptosis by activating caspases in the cytochrome c/Apaf-1/caspase-9 pathway. Acts by opposing the inhibitory activity of inhibitor of apoptosis proteins (IAP). Inhibits the activity of BIRC6/BRUCE by inhibiting its binding to caspases. This is Diablo IAP-binding mitochondrial protein from Pongo abelii (Sumatran orangutan).